We begin with the raw amino-acid sequence, 169 residues long: X polypeptide (169 aa).

This sequence belongs to the IagB/IpgF/P19 family.

This chain is X polypeptide (yubQ), found in Escherichia coli (strain K12).